The chain runs to 585 residues: Protein cereblon (585 aa).

Disordered stretches follow at residues 1–109 (MDEE…DLES) and 156–195 (FSQE…IGFD). The span at 80-95 (QDDTASEGSHPSSDMS) shows a compositional bias: polar residues. Over residues 158–167 (QERRRSRTSE) the composition is skewed to basic and acidic residues. Over residues 178 to 189 (VDPPPQQPPRPP) the composition is skewed to pro residues. Residues 225 to 451 (HMLIFLHQHI…LIKSTFKDET (227 aa)) enclose the Lon N-terminal domain. The CULT domain maps to 450-559 (ETLFFCRYCN…LAGSSVRIGK (110 aa)). Residues C455, C458, C524, and C527 each coordinate Zn(2+).

It belongs to the CRBN family. In terms of assembly, likely a component of a DCX (DDB1-CUL4-X-box) protein ligase complex. May interact with pic/DDB1. In terms of processing, ubiquitinated. Expressed in the fat body (at protein level).

The protein resides in the nucleus. The protein operates within protein modification; protein ubiquitination. Its function is as follows. Substrate recognition component of a DCX (DDB1-CUL4-X-box) E3 protein ligase complex that mediates the ubiquitination and subsequent proteasomal degradation of target proteins. Has an essential role in mediating growth by negatively regulating insulin signaling. It also has a role in maintaining presynaptic function in the neuromuscular junction synapses of third-instar larvae. This chain is Protein cereblon, found in Drosophila melanogaster (Fruit fly).